The sequence spans 459 residues: Putrescine aminotransferase (459 aa).

Pyridoxal 5'-phosphate-binding positions include 150-151 (GT) and glutamine 274. The residue at position 300 (lysine 300) is an N6-(pyridoxal phosphate)lysine. Threonine 332 contributes to the pyridoxal 5'-phosphate binding site.

This sequence belongs to the class-III pyridoxal-phosphate-dependent aminotransferase family. Putrescine aminotransferase subfamily. Requires pyridoxal 5'-phosphate as cofactor.

It carries out the reaction an alkane-alpha,omega-diamine + 2-oxoglutarate = an omega-aminoaldehyde + L-glutamate. It catalyses the reaction putrescine + 2-oxoglutarate = 1-pyrroline + L-glutamate + H2O. The enzyme catalyses cadaverine + 2-oxoglutarate = 5-aminopentanal + L-glutamate. The protein operates within amine and polyamine degradation; putrescine degradation; 4-aminobutanal from putrescine (transaminase route): step 1/1. Functionally, catalyzes the aminotransferase reaction from putrescine to 2-oxoglutarate, leading to glutamate and 4-aminobutanal, which spontaneously cyclizes to form 1-pyrroline. This is the first step in one of two pathways for putrescine degradation, where putrescine is converted into 4-aminobutanoate (gamma-aminobutyrate or GABA) via 4-aminobutanal. Also functions as a cadaverine transaminase in a a L-lysine degradation pathway to succinate that proceeds via cadaverine, glutarate and L-2-hydroxyglutarate. The protein is Putrescine aminotransferase of Enterobacter sp. (strain 638).